A 391-amino-acid polypeptide reads, in one-letter code: Casein kinase II subunit alpha (391 aa).

The tract at residues 36 to 41 (QDDYQL) is interaction with beta subunit. The region spanning 39–324 (YQLVRKLGRG…AREAMEHPYF (286 aa)) is the Protein kinase domain. Residues 45–53 (LGRGKYSEV) and Lys68 contribute to the ATP site. Catalysis depends on Asp156, which acts as the Proton acceptor. Thr344 and Thr360 each carry phosphothreonine; by CDK1. Phosphoserine; by CDK1 occurs at positions 362 and 370.

This sequence belongs to the protein kinase superfamily. Ser/Thr protein kinase family. CK2 subfamily. As to quaternary structure, heterotetramer composed of two catalytic subunits (alpha chain and/or alpha' chain) and two regulatory subunits (beta chains). The tetramer can exist as a combination of 2 alpha/2 beta, 2 alpha'/2 beta or 1 alpha/1 alpha'/2 beta subunits. Also part of a CK2-SPT16-SSRP1 complex composed of SSRP1, SUPT16H, CSNK2A1, CSNK2A2 and CSNK2B, which forms following UV irradiation. Interacts with RNPS1. Interacts with SNAI1. Interacts with PML. Interacts with CCAR2. Interacts with HIRIP3. Phosphorylated at Thr-344, Thr-360, Ser-362 and Ser-370 by CDK1 in prophase and metaphase and dephosphorylated during anaphase. Phosphorylation does not directly affect casein kinase 2 activity, but may contribute to its regulation by forming binding sites for interacting proteins and/or targeting it to different compartments.

It localises to the nucleus. It carries out the reaction L-seryl-[protein] + ATP = O-phospho-L-seryl-[protein] + ADP + H(+). The enzyme catalyses L-threonyl-[protein] + ATP = O-phospho-L-threonyl-[protein] + ADP + H(+). Constitutively active protein kinase whose activity is not directly affected by phosphorylation. Seems to be regulated by level of expression and localization. Catalytic subunit of a constitutively active serine/threonine-protein kinase complex that phosphorylates a large number of substrates containing acidic residues C-terminal to the phosphorylated serine or threonine. Regulates numerous cellular processes, such as cell cycle progression, apoptosis and transcription, as well as viral infection. May act as a regulatory node which integrates and coordinates numerous signals leading to an appropriate cellular response. During mitosis, functions as a component of the p53/TP53-dependent spindle assembly checkpoint (SAC) that maintains cyclin-B-CDK1 activity and G2 arrest in response to spindle damage. Also required for p53/TP53-mediated apoptosis, phosphorylating 'Ser-392' of p53/TP53 following UV irradiation. Phosphorylates a number of DNA repair proteins in response to DNA damage, such as MDC1, MRE11, RAD9A, RAD51 and HTATSF1, promoting their recruitment to DNA damage sites. Can also negatively regulate apoptosis. Phosphorylates the caspases CASP9 and CASP2 and the apoptotic regulator NOL3. Phosphorylation protects CASP9 from cleavage and activation by CASP8, and inhibits the dimerization of CASP2 and activation of CASP8. Phosphorylates YY1, protecting YY1 from cleavage by CASP7 during apoptosis. Regulates transcription by direct phosphorylation of RNA polymerases I, II, III and IV. Also phosphorylates and regulates numerous transcription factors including NF-kappa-B, STAT1, CREB1, IRF1, IRF2, ATF1, ATF4, SRF, MAX, JUN, FOS, MYC and MYB. Phosphorylates Hsp90 and its co-chaperones FKBP4 and CDC37, which is essential for chaperone function. Mediates sequential phosphorylation of FNIP1, promoting its gradual interaction with Hsp90, leading to activate both kinase and non-kinase client proteins of Hsp90. Regulates Wnt signaling by phosphorylating CTNNB1 and the transcription factor LEF1. Acts as an ectokinase that phosphorylates several extracellular proteins. Plays an important role in the circadian clock function by phosphorylating BMAL1 at 'Ser-90' which is pivotal for its interaction with CLOCK and which controls CLOCK nuclear entry. Phosphorylates FMR1, promoting FMR1-dependent formation of a membraneless compartment. May phosphorylate histone H2A on 'Ser-1'. This is Casein kinase II subunit alpha (CSNK2A1) from Bos taurus (Bovine).